A 580-amino-acid chain; its full sequence is Alpha-thujene synthase, chloroplastic (580 aa).

A chloroplast-targeting transit peptide spans 1–32 (MALQLLTPSFSFQHSPSPHKLTTLRYTHHRIR). 5 residues coordinate (2E)-geranyl diphosphate: Arg-296, Asp-333, Asp-337, Arg-473, and Asp-476. Residues Asp-333 and Asp-337 each coordinate Mg(2+). The DDXXD motif motif lies at 333 to 337 (DDVYD). Residues Asp-476, Thr-480, and Glu-484 each contribute to the Mg(2+) site.

It belongs to the terpene synthase family. Tpsb subfamily. As to quaternary structure, monomer. Mg(2+) serves as cofactor. Mn(2+) is required as a cofactor. As to expression, expressed in developing and mature fruits. Barely detectable in leaves and shoots.

The protein localises to the plastid. Its subcellular location is the chloroplast. The enzyme catalyses (2E)-geranyl diphosphate = alpha-thujene + diphosphate. It participates in secondary metabolite biosynthesis; terpenoid biosynthesis. Its function is as follows. Monoterpene synthase (TPS) involved in the biosynthesis of monoterpene natural products used by traditional Chinese medicine to treat headache, inflammation and intoxication. Catalyzes the conversion of (2E)-geranyl diphosphate (GPP) into alpha-thujene. The chain is Alpha-thujene synthase, chloroplastic from Litsea cubeba (Aromatic litsea).